Here is a 285-residue protein sequence, read N- to C-terminus: Purine biosynthesis transcriptional repressor PurR (285 aa).

Residues 1 to 73 (MKFRRSGRLV…GAAGGVKYIP (73 aa)) form a DNA binding domain region. Residues 74-285 (KMKQAEAEEF…NLLKNGETES (212 aa)) are effector binding domain. Residue Tyr-102 coordinates guanosine 3',5'-bis(diphosphate). 5-phospho-alpha-D-ribose 1-diphosphate is bound by residues Ala-138, Thr-139, Lys-140, and Arg-160. Residues Gly-178 and Ser-179 each contribute to the guanosine 3',5'-bis(diphosphate) site. The 5-phospho-alpha-D-ribose 1-diphosphate site is built by Asp-203, Asp-204, Phe-205, Lys-207, and Ala-208. Position 207 (Lys-207) interacts with guanosine 3',5'-bis(diphosphate). Gly-209, Gly-210, and Thr-211 together coordinate guanosine 3',5'-bis(diphosphate). Thr-211 contacts 5-phospho-alpha-D-ribose 1-diphosphate.

The protein belongs to the purine/pyrimidine phosphoribosyltransferase family. PurR subfamily. As to quaternary structure, homodimer.

The binding of PurR to DNA, and therefore the repressor activity, is influenced by interaction with the effector molecules 5-phosphoribosyl 1-pyrophosphate (PRPP) and (p)ppGpp. PRPP binds to PurR and reduces affinity of PurR for DNA, which inhibits the repressor activity and induces transcription of the target genes. On the contrary, (p)ppGpp enhances binding of PurR to DNA and repression of the transcription. PRPP and (p)ppGpp compete for PurR binding and allosteric control of transcription. ppGpp maintains PurR-DNA interaction and prevents PRPP from de-repressing PurR regulation during conditions that lead to (p)ppGpp induction, such as upon amino acid starvation. In terms of biological role, DNA-binding transcriptional repressor that controls the expression of a number of genes involved in the synthesis, metabolism and transport of purines. In response to a signal of excess adenine, represses the transcription of the pur operon, which encodes enzymes of the purine biosynthetic pathway. It also represses the expression of the purA and purR genes. In addition, controls the expression of several other genes or operons, which encode enzymes or transporters playing a role in purine nucleotide metabolism. Acts by binding directly to specific DNA sequences, named PurBoxes, in the upstream control regions of affected genes. Two PurBoxes are required for high-affinity PurR binding. Also responds to amino acid starvation via (p)ppGpp, which strongly increases PurR activity and repression of purine nucleotide biosynthesis genes. In Bacillus subtilis (strain 168), this protein is Purine biosynthesis transcriptional repressor PurR.